Reading from the N-terminus, the 327-residue chain is Sphingomyelin synthase-related 2 (327 aa).

The next 5 membrane-spanning stretches (helical) occupy residues 54-74 (LLAT…LAWV), 99-119 (AIRI…LVMF), 131-151 (VFFC…IFQV), 192-212 (LCGD…FLVF), and 220-240 (LQPL…SILL). Residue H201 is part of the active site. The Cytoplasmic segment spans residues 241-327 (ARKHYMIDIV…TLKKSRRSFE (87 aa)). Catalysis depends on residues H244 and D248.

It belongs to the sphingomyelin synthase family.

Its subcellular location is the membrane. The chain is Sphingomyelin synthase-related 2 from Caenorhabditis elegans.